We begin with the raw amino-acid sequence, 435 residues long: Ribosomal protein uS12 methylthiotransferase RimO (435 aa).

Residues 2–118 (KKFHIVKLGC…IVEKIENGEY (117 aa)) form the MTTase N-terminal domain. [4Fe-4S] cluster-binding residues include cysteine 11, cysteine 47, cysteine 81, cysteine 150, cysteine 154, and cysteine 157. The region spanning 136–364 (IPDSHYAYVK…MTVQSEISKN (229 aa)) is the Radical SAM core domain. The 69-residue stretch at 367–435 (EKYIGETLEV…EYDLEGEIVE (69 aa)) folds into the TRAM domain.

The protein belongs to the methylthiotransferase family. RimO subfamily. [4Fe-4S] cluster is required as a cofactor.

The protein localises to the cytoplasm. The catalysed reaction is L-aspartate(89)-[ribosomal protein uS12]-hydrogen + (sulfur carrier)-SH + AH2 + 2 S-adenosyl-L-methionine = 3-methylsulfanyl-L-aspartate(89)-[ribosomal protein uS12]-hydrogen + (sulfur carrier)-H + 5'-deoxyadenosine + L-methionine + A + S-adenosyl-L-homocysteine + 2 H(+). Functionally, catalyzes the methylthiolation of an aspartic acid residue of ribosomal protein uS12. This is Ribosomal protein uS12 methylthiotransferase RimO from Petrotoga mobilis (strain DSM 10674 / SJ95).